A 301-amino-acid chain; its full sequence is Bifunctional protein FolD (301 aa).

Residues 166 to 168, Ser-191, and Ile-232 contribute to the NADP(+) site; that span reads GKS.

Belongs to the tetrahydrofolate dehydrogenase/cyclohydrolase family. As to quaternary structure, homodimer.

The catalysed reaction is (6R)-5,10-methylene-5,6,7,8-tetrahydrofolate + NADP(+) = (6R)-5,10-methenyltetrahydrofolate + NADPH. It carries out the reaction (6R)-5,10-methenyltetrahydrofolate + H2O = (6R)-10-formyltetrahydrofolate + H(+). The protein operates within one-carbon metabolism; tetrahydrofolate interconversion. In terms of biological role, catalyzes the oxidation of 5,10-methylenetetrahydrofolate to 5,10-methenyltetrahydrofolate and then the hydrolysis of 5,10-methenyltetrahydrofolate to 10-formyltetrahydrofolate. In Orientia tsutsugamushi (strain Boryong) (Rickettsia tsutsugamushi), this protein is Bifunctional protein FolD.